The chain runs to 313 residues: tRNA dimethylallyltransferase (313 aa).

11-18 is an ATP binding site; the sequence is GPTAGGKT. Residue 13 to 18 coordinates substrate; sequence TAGGKT. 3 interaction with substrate tRNA regions span residues 36 to 39, 160 to 164, and 243 to 248; these read DSAL, QRIGR, and RCVGYR.

This sequence belongs to the IPP transferase family. As to quaternary structure, monomer. Mg(2+) is required as a cofactor.

The catalysed reaction is adenosine(37) in tRNA + dimethylallyl diphosphate = N(6)-dimethylallyladenosine(37) in tRNA + diphosphate. In terms of biological role, catalyzes the transfer of a dimethylallyl group onto the adenine at position 37 in tRNAs that read codons beginning with uridine, leading to the formation of N6-(dimethylallyl)adenosine (i(6)A). The polypeptide is tRNA dimethylallyltransferase (Neisseria meningitidis serogroup B (strain ATCC BAA-335 / MC58)).